The chain runs to 426 residues: Histidine--tRNA ligase (426 aa).

The protein belongs to the class-II aminoacyl-tRNA synthetase family. Homodimer.

It is found in the cytoplasm. It catalyses the reaction tRNA(His) + L-histidine + ATP = L-histidyl-tRNA(His) + AMP + diphosphate + H(+). This is Histidine--tRNA ligase from Streptococcus thermophilus (strain CNRZ 1066).